Consider the following 97-residue polypeptide: MSEVENSNTVDLQSQLLPLELIEKCIGSRIWIAMKNDKEFVGTLLGFDAYVNIFLKDVTEYEYTPEGLKTVKLDNILLNGNHVCLLVPGGEGPKVKA.

One can recognise a Sm domain in the interval Leu-17 to Gly-92.

This sequence belongs to the snRNP Sm proteins family. Component of the precatalytic spliceosome (spliceosome B complex). Component of the U4/U6-U5 tri-snRNP complex, a building block of the precatalytic spliceosome (spliceosome B complex). LSM2, LSM3, LSM4, LSM5, LSM6, LSM7 and LSM8 form a heptameric, ring-shaped subcomplex (the LSM2-8 complex) that is part of the U4/U6-U5 tri-snRNP complex and the precatalytic spliceosome.

It is found in the nucleus. In terms of biological role, plays a role in pre-mRNA splicing as component of the U4/U6-U5 tri-snRNP complex that is involved in spliceosome assembly, and as component of the precatalytic spliceosome (spliceosome B complex). The heptameric LSM2-8 complex binds specifically to the 3'-terminal U-tract of U6 snRNA. In Dictyostelium discoideum (Social amoeba), this protein is Probable U6 snRNA-associated Sm-like protein LSm5 (lsm5).